Here is a 114-residue protein sequence, read N- to C-terminus: Ribonuclease P protein component (114 aa).

The protein belongs to the RnpA family. As to quaternary structure, consists of a catalytic RNA component (M1 or rnpB) and a protein subunit.

It carries out the reaction Endonucleolytic cleavage of RNA, removing 5'-extranucleotides from tRNA precursor.. Functionally, RNaseP catalyzes the removal of the 5'-leader sequence from pre-tRNA to produce the mature 5'-terminus. It can also cleave other RNA substrates such as 4.5S RNA. The protein component plays an auxiliary but essential role in vivo by binding to the 5'-leader sequence and broadening the substrate specificity of the ribozyme. The sequence is that of Ribonuclease P protein component from Borrelia duttonii (strain Ly).